We begin with the raw amino-acid sequence, 604 residues long: Pescadillo homolog (604 aa).

The interval 275–299 is disordered; it reads NSEPAGLIEDKEGEDNKESSKTDES. Residues 282 to 299 show a composition bias toward basic and acidic residues; it reads IEDKEGEDNKESSKTDES. The BRCT domain occupies 337–427; sequence ECRSLFKNLK…IILPTEGYIV (91 aa). Disordered stretches follow at residues 518–557 and 574–604; these read KTFS…DAAD and IEIN…AKGR. Basic and acidic residues-rich tracts occupy residues 531 to 557 and 577 to 586; these read VVDK…DAAD and NQERKKDKVN.

The protein belongs to the pescadillo family.

The protein localises to the nucleus. Its subcellular location is the nucleolus. It is found in the nucleoplasm. Required for maturation of ribosomal RNAs and formation of the large ribosomal subunit. The sequence is that of Pescadillo homolog (PES) from Oryza sativa subsp. japonica (Rice).